The chain runs to 268 residues: Esterase GME11355 (268 aa).

Catalysis depends on charge relay system residues S122, D212, and H240.

Belongs to the LovG family.

It functions in the pathway secondary metabolite biosynthesis. In terms of biological role, esterase; part of the gene cluster that mediates the biosynthesis of dibenzodioxocinones such as pestalotiollide B, a novel class of inhibitors against cholesterol ester transfer protein (CEPT). The biosynthesis initiates from condensation of acetate and malonate units catalyzed by the non-reducing PKS pks8/GME11356. Pks8/GME11356 lacks a thioesterase (TE) domain, which is important to the cyclizing of the third ring of atrochrysone carboxylic acid, and the esterase GME11355 might play the role of TE and catalyzes the cyclization reaction of the C ring. The lactamase-like protein GME11357 (or other beta-lactamases in Pestalotiopsis microspora) probably hydrolyzes the thioester bond between the ACP of pks8/GME11356 and the intermediate to release atrochrysone carboxylic acid, which is spontaneously dehydrates to form endocrocin anthrone. Endocrocin anthrone is further converted to emodin via the endocrocin intermediate. Emodin is then oxidized by several enzymes such as the Baeyer-Villiger oxidase GME11358, the oxidoreductase GME11367, the short chain dehydrogenase/reductase GME11373, as well as by other oxidoreductases from the cluster, to modify the A and C rings and open the B ring, and finally yield monodictyphenone. The prenyltransferase GME11375 may catalyze the addition reaction between the C5 side chains and the carbon bone of dibenzodioxocinones. The remaining biochemical reactions to the final product dibenzodioxocinones should be methylation catalyzed by methyltransferase GME11366 and reduction and lactonization reaction catalyzed by a series of oxidordeuctases. In Pestalotiopsis microspora, this protein is Esterase GME11355.